Consider the following 279-residue polypeptide: Esterase CG5412 (279 aa).

Residues serine 133, aspartate 191, and histidine 218 each act as charge relay system in the active site. Residues 249-279 form a disordered region; sequence QSGNASFVDSGAEDDNDAEVAAMTAELDESD.

Belongs to the LovG family.

This chain is Esterase CG5412, found in Drosophila melanogaster (Fruit fly).